A 1381-amino-acid chain; its full sequence is Protein HEG homolog 1 (1381 aa).

Positions 1–29 are cleaved as a signal peptide; sequence MASPRASRWPPPLLLLLLPLLLLPPAAPG. The segment at 24–108 is disordered; it reads PPAAPGTRDP…APRGGSADAA (85 aa). The span at 25-37 shows a compositional bias: pro residues; sequence PAAPGTRDPPPSP. At 30-1248 the chain is on the extracellular side; sequence TRDPPPSPAR…GLNCGNPYQL (1219 aa). Low complexity predominate over residues 38–52; sequence ARRALSLAPLAGAGL. The segment covering 55–74 has biased composition (basic and acidic residues); it reads QLERRPEREPPPTPPRERRG. Residue T67 is glycosylated (O-linked (GalNAc...) threonine). Low complexity predominate over residues 93–105; the sequence is RGPSGRAPRGGSA. N-linked (GlcNAc...) asparagine glycosylation is found at N123, N159, N180, and N314. The segment covering 301–316 has biased composition (low complexity); that stretch reads DLSSSSESTEKLNNST. Disordered stretches follow at residues 301–325 and 376–447; these read DLSS…SVSQ and PSAV…RSVA. Polar residues predominate over residues 424-444; that stretch reads LASSSEVQNGSPMSQTETVSR. N-linked (GlcNAc...) asparagine glycosylation is found at N462, N520, and N610. A disordered region spans residues 491-529; sequence STVQSGGSHTALGDRSYSESSSTSSSESLNSSAPRGERS. The segment covering 508–522 has biased composition (low complexity); it reads SESSSTSSSESLNSS. Disordered regions lie at residues 612–680, 706–757, and 774–830; these read SSYD…PLPS, SDAS…PVTS, and QTAD…TLPA. Polar residues predominate over residues 620 to 648; it reads QPSTESPVLHTSNLPSYTPTINMPNTSVV. 2 stretches are compositionally biased toward low complexity: residues 657–680 and 706–748; these read SDSS…PLPS and SDAS…PVLP. Polar residues-rich tracts occupy residues 774 to 784 and 792 to 809; these read QTADLKSQSTP and ESKS…TKAV. The segment covering 810–825 has biased composition (low complexity); that stretch reads TTNSPLPPSLTESSTE. The EGF-like 1 domain occupies 985–1023; that stretch reads SVNSCAVNPCLHNGECVADNTSRGYHCRCPPSWQGDDCS. Cystine bridges form between C989/C1000, C994/C1011, C1013/C1022, C1029/C1040, C1034/C1049, and C1051/C1062. Positions 1025–1063 constitute an EGF-like 2; calcium-binding domain; it reads DVNECLSNPCPSTAMCNNTQGSFICKCPVGYQLEKGICN. A glycan (N-linked (GlcNAc...) asparagine) is linked at N1137. Residues 1249–1269 form a helical membrane-spanning segment; sequence ITVVIAAAGGGLLLILGIALI. Residues 1270–1381 are Cytoplasmic-facing; the sequence is VTCCRKNKND…SDESRRRDYF (112 aa). At S1359 the chain carries Phosphoserine.

In terms of assembly, interacts with CCM2 and KRIT1; KRIT1 markedly facilitates interaction with CCM2.

It is found in the cell membrane. It localises to the cell junction. The protein localises to the secreted. Its function is as follows. Receptor component of the CCM signaling pathway which is a crucial regulator of heart and vessel formation and integrity. May act through the stabilization of endothelial cell junctions. The protein is Protein HEG homolog 1 (HEG1) of Homo sapiens (Human).